The chain runs to 1012 residues: F-box DNA helicase 1 (1012 aa).

The tract at residues 1-54 is disordered; that stretch reads MHLTADDCEALSRSTEGLSSLTQPLNQRRSRGDVNRGLQPTHRTRTQPGAQGRQ. Over residues 12-27 the composition is skewed to polar residues; that stretch reads SRSTEGLSSLTQPLNQ. An F-box domain is found at 185-234; it reads QGSIEDLPDEVLRSIFAFLPVTDLYQSLSLVCRRWRIIVGDPWFIPWKKL. Positions 427–692 constitute a UvrD-like helicase ATP-binding domain; sequence THEQQRILNH…YYLTQSFRFG (266 aa). 448-455 lines the ATP pocket; it reads AFAGTGKT.

Belongs to the helicase family. UvrD subfamily. In terms of assembly, part of the SCF (SKP1-CUL1-F-box) E3 ubiquitin-protein ligase complex SCF(FBH1).

It is found in the nucleus. Its subcellular location is the chromosome. It catalyses the reaction Couples ATP hydrolysis with the unwinding of duplex DNA by translocating in the 3'-5' direction.. It carries out the reaction ATP + H2O = ADP + phosphate + H(+). It participates in protein modification; protein ubiquitination. 3'-5' DNA helicase and substrate-recognition component of the SCF(FBH1) E3 ubiquitin ligase complex that plays a key role in response to stalled/damaged replication forks. Involved in genome maintenance by acting as an anti-recombinogenic helicase and preventing extensive strand exchange during homologous recombination: promotes RAD51 filament dissolution from stalled forks, thereby inhibiting homologous recombination and preventing excessive recombination. Also promotes cell death and DNA double-strand breakage in response to replication stress: promotes the endonucleolytic DNA cleavage following prolonged replication stress via its helicase activity, possibly to eliminate cells with excessive replication stress. This is F-box DNA helicase 1 from Gallus gallus (Chicken).